We begin with the raw amino-acid sequence, 344 residues long: MEERILQAKQEILEAPLTTLAELESFRLHFTVRKGLVAALFGELKNVASADKPRIGQLLNELKQTAESRVSDAEAHLAAAQNSKQQPSLLDLTLPGRRSFCGSEHPVQKVLGDMKSIFNAMGFTIATGPELEVGNYNFDMLNFAPDHPARDMQDTFFVRTGSGNTPDVLLRTHTSPVQIRVMLDEKPPIRVICPGKVYRNEAISARSYCVFHQLEGLYIDKNVSFADLKATIYSFAQQMFGSDVKLRFRPSFFPFTEPSAEVDVTCYLCGGKGCRVCKKSGWLEILGCGMVHPNVLRNCGIDPEEWSGYAFGMGVDRTVLLRYKIDDIRLLFENDVRMLQQFKA.

Mg(2+) is bound at residue E257.

Belongs to the class-II aminoacyl-tRNA synthetase family. Phe-tRNA synthetase alpha subunit type 1 subfamily. In terms of assembly, tetramer of two alpha and two beta subunits. Mg(2+) is required as a cofactor.

Its subcellular location is the cytoplasm. It carries out the reaction tRNA(Phe) + L-phenylalanine + ATP = L-phenylalanyl-tRNA(Phe) + AMP + diphosphate + H(+). This Chlorobium chlorochromatii (strain CaD3) protein is Phenylalanine--tRNA ligase alpha subunit.